We begin with the raw amino-acid sequence, 371 residues long: Chaperone protein DnaJ (371 aa).

The J domain maps to 6–71 (DYYEILGVEK…QKRAQYDRFG (66 aa)). Residues 104–123 (GGMGGQQRQRRNRNEPRRGS) form a disordered region. The CR-type zinc finger occupies 139 to 217 (GIEKEIEFDT…CKGKGRVAEH (79 aa)). Zn(2+) contacts are provided by cysteine 152, cysteine 155, cysteine 169, cysteine 172, cysteine 191, cysteine 194, cysteine 205, and cysteine 208. CXXCXGXG motif repeat units lie at residues 152–159 (CDECKGTG), 169–176 (CGTCGGSG), 191–198 (CPTCHGQG), and 205–212 (CKPCKGKG).

It belongs to the DnaJ family. As to quaternary structure, homodimer. It depends on Zn(2+) as a cofactor.

The protein localises to the cytoplasm. Its function is as follows. Participates actively in the response to hyperosmotic and heat shock by preventing the aggregation of stress-denatured proteins and by disaggregating proteins, also in an autonomous, DnaK-independent fashion. Unfolded proteins bind initially to DnaJ; upon interaction with the DnaJ-bound protein, DnaK hydrolyzes its bound ATP, resulting in the formation of a stable complex. GrpE releases ADP from DnaK; ATP binding to DnaK triggers the release of the substrate protein, thus completing the reaction cycle. Several rounds of ATP-dependent interactions between DnaJ, DnaK and GrpE are required for fully efficient folding. Also involved, together with DnaK and GrpE, in the DNA replication of plasmids through activation of initiation proteins. The protein is Chaperone protein DnaJ of Bdellovibrio bacteriovorus (strain ATCC 15356 / DSM 50701 / NCIMB 9529 / HD100).